We begin with the raw amino-acid sequence, 306 residues long: Erythromycin 3''-O-methyltransferase (306 aa).

Positions 157 and 162 each coordinate S-adenosyl-L-methionine.

Belongs to the methyltransferase superfamily.

It carries out the reaction erythromycin C + S-adenosyl-L-methionine = erythromycin A + S-adenosyl-L-homocysteine + H(+). The catalysed reaction is erythromycin D + S-adenosyl-L-methionine = erythromycin B + S-adenosyl-L-homocysteine + H(+). The protein operates within antibiotic biosynthesis; erythromycin biosynthesis. In terms of biological role, S-adenosyl-L-methionine-dependent O-methyltransferase that catalyzes the last step in the erythromycin biosynthesis pathway. Methylates the position 3 of the mycarosyl moiety of erythromycin C, forming the most active form of the antibiotic, erythromycin A. Can also methylate the precursor erythromycin D, forming erythromycin B. The protein is Erythromycin 3''-O-methyltransferase (eryG) of Saccharopolyspora erythraea (strain ATCC 11635 / DSM 40517 / JCM 4748 / NBRC 13426 / NCIMB 8594 / NRRL 2338).